Here is a 432-residue protein sequence, read N- to C-terminus: Mitochondrial distribution and morphology protein 12 (432 aa).

The SMP-LTD domain maps to Met-1–Ile-432. 2 disordered regions span residues Trp-182–Arg-273 and Gln-354–Gln-377. Residues Thr-214–Ser-234 show a composition bias toward low complexity. Basic and acidic residues-rich tracts occupy residues Thr-243 to Asp-253 and Gln-355 to Pro-364.

This sequence belongs to the MDM12 family. In terms of assembly, component of the ER-mitochondria encounter structure (ERMES) or MDM complex, composed of mmm1, mdm10, mdm12 and mdm34. A mmm1 homodimer associates with one molecule of mdm12 on each side in a pairwise head-to-tail manner, and the SMP-LTD domains of mmm1 and mdm12 generate a continuous hydrophobic tunnel for phospholipid trafficking.

The protein localises to the mitochondrion outer membrane. Its subcellular location is the endoplasmic reticulum membrane. In terms of biological role, component of the ERMES/MDM complex, which serves as a molecular tether to connect the endoplasmic reticulum (ER) and mitochondria. Components of this complex are involved in the control of mitochondrial shape and protein biogenesis, and function in nonvesicular lipid trafficking between the ER and mitochondria. Mdm12 is required for the interaction of the ER-resident membrane protein MMM1 and the outer mitochondrial membrane-resident beta-barrel protein mdm10. The mdm12-mmm1 subcomplex functions in the major beta-barrel assembly pathway that is responsible for biogenesis of all mitochondrial outer membrane beta-barrel proteins, and acts in a late step after the SAM complex. The mdm10-mdm12-mmm1 subcomplex further acts in the TOM40-specific pathway after the action of the mdm12-mmm1 complex. Essential for establishing and maintaining the structure of mitochondria and maintenance of mtDNA nucleoids. The polypeptide is Mitochondrial distribution and morphology protein 12 (Aspergillus flavus (strain ATCC 200026 / FGSC A1120 / IAM 13836 / NRRL 3357 / JCM 12722 / SRRC 167)).